A 107-amino-acid chain; its full sequence is MMKVLVVVALLATLISYSSSEGIDDLEADELLSLMANEQTRKECIPKHHECTSNKHGCCRGNFFKYKCQCTTVVTQDGEQTERCFCGTPPHHKAAELVVGFGKKIFG.

The N-terminal stretch at 1–20 (MMKVLVVVALLATLISYSSS) is a signal peptide. Residues 21 to 41 (EGIDDLEADELLSLMANEQTR) constitute a propeptide that is removed on maturation. 4 cysteine pairs are disulfide-bonded: Cys-44–Cys-59, Cys-51–Cys-68, Cys-58–Cys-86, and Cys-70–Cys-84.

It belongs to the neurotoxin 19 (CSTX) family. 04 (U1-Lctx) subfamily. In terms of tissue distribution, expressed by the venom gland.

The protein localises to the secreted. The sequence is that of U1-lycotoxin-Ls1b from Lycosa singoriensis (Wolf spider).